The sequence spans 216 residues: Probable nicotinate-nucleotide adenylyltransferase (216 aa).

The protein belongs to the NadD family.

It catalyses the reaction nicotinate beta-D-ribonucleotide + ATP + H(+) = deamido-NAD(+) + diphosphate. Its pathway is cofactor biosynthesis; NAD(+) biosynthesis; deamido-NAD(+) from nicotinate D-ribonucleotide: step 1/1. Its function is as follows. Catalyzes the reversible adenylation of nicotinate mononucleotide (NaMN) to nicotinic acid adenine dinucleotide (NaAD). In Marinobacter nauticus (strain ATCC 700491 / DSM 11845 / VT8) (Marinobacter aquaeolei), this protein is Probable nicotinate-nucleotide adenylyltransferase.